The following is a 355-amino-acid chain: Protein RecA (355 aa).

67-74 (GPESSGKT) contributes to the ATP binding site. Residues 336 to 355 (NSAASDYEDNENEEMNNEEF) form a disordered region. Residues 341-355 (DYEDNENEEMNNEEF) show a composition bias toward acidic residues.

This sequence belongs to the RecA family.

It localises to the cytoplasm. Functionally, can catalyze the hydrolysis of ATP in the presence of single-stranded DNA, the ATP-dependent uptake of single-stranded DNA by duplex DNA, and the ATP-dependent hybridization of homologous single-stranded DNAs. It interacts with LexA causing its activation and leading to its autocatalytic cleavage. In Photorhabdus laumondii subsp. laumondii (strain DSM 15139 / CIP 105565 / TT01) (Photorhabdus luminescens subsp. laumondii), this protein is Protein RecA.